Reading from the N-terminus, the 417-residue chain is Gamma-glutamyl phosphate reductase (417 aa).

The protein belongs to the gamma-glutamyl phosphate reductase family.

The protein resides in the cytoplasm. It carries out the reaction L-glutamate 5-semialdehyde + phosphate + NADP(+) = L-glutamyl 5-phosphate + NADPH + H(+). Its pathway is amino-acid biosynthesis; L-proline biosynthesis; L-glutamate 5-semialdehyde from L-glutamate: step 2/2. In terms of biological role, catalyzes the NADPH-dependent reduction of L-glutamate 5-phosphate into L-glutamate 5-semialdehyde and phosphate. The product spontaneously undergoes cyclization to form 1-pyrroline-5-carboxylate. In Clostridium novyi (strain NT), this protein is Gamma-glutamyl phosphate reductase.